The chain runs to 642 residues: Arginine--tRNA ligase, chloroplastic/mitochondrial (642 aa).

The N-terminal 53 residues, 1 to 53 (MFIFPKDENRRETLTTKLRFSADHLTFTTVTEKLRATAWRFAFSSRAKSVVAM), are a transit peptide targeting the chloroplast and mitochondrion. Ala54 is subject to N-acetylalanine. The short motif at 190-201 (PNIAKEMHVGHL) is the 'HIGH' region element.

It belongs to the class-I aminoacyl-tRNA synthetase family.

The protein resides in the plastid. The protein localises to the chloroplast. Its subcellular location is the mitochondrion. The catalysed reaction is tRNA(Arg) + L-arginine + ATP = L-arginyl-tRNA(Arg) + AMP + diphosphate. In terms of biological role, forms part of a macromolecular complex that catalyzes the attachment of specific amino acids to cognate tRNAs during protein synthesis. The protein is Arginine--tRNA ligase, chloroplastic/mitochondrial of Arabidopsis thaliana (Mouse-ear cress).